Here is a 53-residue protein sequence, read N- to C-terminus: uncharacterized protein (53 aa).

Residues 13-35 (FLLHSFTFPIAHCPSFSWASFFF) traverse the membrane as a helical segment.

It localises to the membrane. This is an uncharacterized protein from Saccharomyces cerevisiae (strain ATCC 204508 / S288c) (Baker's yeast).